Consider the following 417-residue polypeptide: Echinulin prenyltransferase 1 (417 aa).

Residues Arg90, Lys179, Tyr181, Lys248, Tyr250, Tyr333, Tyr398, and Tyr402 each coordinate dimethylallyl diphosphate.

The protein belongs to the tryptophan dimethylallyltransferase family.

The catalysed reaction is cyclo(L-tryptophyl-L-alanyl) + dimethylallyl diphosphate = preechinulin + diphosphate. It participates in secondary metabolite biosynthesis. The protein operates within alkaloid biosynthesis. Prenyltransferase; part of the gene cluster that mediates the biosynthesis of echinulin family alkaloid. The pathway begins with the biosynthesis of the cyclic dipeptide cyclo-L-Trp-L-Ala (cyclo-TA) by the NRPS echPS via condensation of L-alanine and L-tryptophan. The prenyltransferase echPT1 then catalyzes the first prenylation step, a reverse prenylation reaction at C2, to yield preechinulin. Preechinulin is the substrate of the cytochrome P450 monooxygenase echP450 that catalyzes the formation of the double bond between C10 and C11 to produce neoechulin A. The unique prenyltransferase echPT2 functions as a competitive enzyme with echP450 for preechinulin metabolization and uses preechinulin for effective regiospecific prenylations. Preechinulin is prenylated by echPT2 at C5 or C7. C7-prenylation leads to accumulation of tardioxopiperazine B without further modification by echPT2. In contrast, the C5-prenylated tardioxopiperazine A can be prenylated again by echPT2, predominantly at C7 to form echinulin or less frequently at C4 to give variecolorin L. EchPT2 also accepts neoechilunin A to produce varlecolorin G (prenylation at C5) or isoechinulin A (prenylation at C7). EchPT2 further converts isoechinulin A into dehydroechinulin. Moreover, a yet unidentified enzyme can also convert neoechilunin A into neoechilunin B by introducing a double bond between positions C14 and C17 and thus provides a further substrate to echPT2 for C5 and C7 prenylation. The chain is Echinulin prenyltransferase 1 from Aspergillus ruber (Eurotium rubrum).